The following is a 537-amino-acid chain: Glucose-6-phosphate isomerase (537 aa).

E341 serves as the catalytic Proton donor. Catalysis depends on residues H372 and K501.

It belongs to the GPI family.

Its subcellular location is the cytoplasm. The enzyme catalyses alpha-D-glucose 6-phosphate = beta-D-fructose 6-phosphate. It functions in the pathway carbohydrate biosynthesis; gluconeogenesis. It participates in carbohydrate degradation; glycolysis; D-glyceraldehyde 3-phosphate and glycerone phosphate from D-glucose: step 2/4. Functionally, catalyzes the reversible isomerization of glucose-6-phosphate to fructose-6-phosphate. This Jannaschia sp. (strain CCS1) protein is Glucose-6-phosphate isomerase.